Reading from the N-terminus, the 484-residue chain is Cobyric acid synthase (484 aa).

One can recognise a GATase cobBQ-type domain in the interval 246-437 (ALRVVVPALP…VHGLFDTPAA (192 aa)). C327 acts as the Nucleophile in catalysis. H429 is a catalytic residue.

The protein belongs to the CobB/CobQ family. CobQ subfamily.

It participates in cofactor biosynthesis; adenosylcobalamin biosynthesis. Functionally, catalyzes amidations at positions B, D, E, and G on adenosylcobyrinic A,C-diamide. NH(2) groups are provided by glutamine, and one molecule of ATP is hydrogenolyzed for each amidation. In Paraburkholderia phymatum (strain DSM 17167 / CIP 108236 / LMG 21445 / STM815) (Burkholderia phymatum), this protein is Cobyric acid synthase.